Here is a 157-residue protein sequence, read N- to C-terminus: UPF0756 membrane protein ABC2716 (157 aa).

Transmembrane regions (helical) follow at residues 8–28, 54–74, 84–104, and 117–137; these read FLLLLMAIALIAKNQSLIIAI, LGVTIITIAVLVPIATGDIGF, LYAWVALGSGIAVALVAASGI, and LVLGTIVAVSFLNGVAVGPLI.

It belongs to the UPF0756 family.

It localises to the cell membrane. The chain is UPF0756 membrane protein ABC2716 from Shouchella clausii (strain KSM-K16) (Alkalihalobacillus clausii).